Consider the following 367-residue polypeptide: Methylthioribose-1-phosphate isomerase (367 aa).

Residues 54–56 (RGA), arginine 91, and glutamine 201 each bind substrate. Aspartate 242 acts as the Proton donor in catalysis. Substrate is bound at residue 252-253 (NK).

It belongs to the eIF-2B alpha/beta/delta subunits family. MtnA subfamily.

It catalyses the reaction 5-(methylsulfanyl)-alpha-D-ribose 1-phosphate = 5-(methylsulfanyl)-D-ribulose 1-phosphate. Its pathway is amino-acid biosynthesis; L-methionine biosynthesis via salvage pathway; L-methionine from S-methyl-5-thio-alpha-D-ribose 1-phosphate: step 1/6. Functionally, catalyzes the interconversion of methylthioribose-1-phosphate (MTR-1-P) into methylthioribulose-1-phosphate (MTRu-1-P). This chain is Methylthioribose-1-phosphate isomerase, found in Acidiphilium cryptum (strain JF-5).